Here is a 265-residue protein sequence, read N- to C-terminus: Acetylglutamate kinase (265 aa).

Substrate contacts are provided by residues 41-42 (GG), arginine 63, and asparagine 156.

Belongs to the acetylglutamate kinase family. ArgB subfamily.

It localises to the cytoplasm. It carries out the reaction N-acetyl-L-glutamate + ATP = N-acetyl-L-glutamyl 5-phosphate + ADP. Its pathway is amino-acid biosynthesis; L-arginine biosynthesis; N(2)-acetyl-L-ornithine from L-glutamate: step 2/4. In terms of biological role, catalyzes the ATP-dependent phosphorylation of N-acetyl-L-glutamate. The protein is Acetylglutamate kinase of Oceanobacillus iheyensis (strain DSM 14371 / CIP 107618 / JCM 11309 / KCTC 3954 / HTE831).